A 92-amino-acid chain; its full sequence is Cell division topological specificity factor (92 aa).

The protein belongs to the MinE family.

Its function is as follows. Prevents the cell division inhibition by proteins MinC and MinD at internal division sites while permitting inhibition at polar sites. This ensures cell division at the proper site by restricting the formation of a division septum at the midpoint of the long axis of the cell. The polypeptide is Cell division topological specificity factor (Desulforamulus reducens (strain ATCC BAA-1160 / DSM 100696 / MI-1) (Desulfotomaculum reducens)).